A 359-amino-acid chain; its full sequence is Histidinol-phosphate aminotransferase (359 aa).

Lys-212 is subject to N6-(pyridoxal phosphate)lysine.

It belongs to the class-II pyridoxal-phosphate-dependent aminotransferase family. Histidinol-phosphate aminotransferase subfamily. As to quaternary structure, homodimer. The cofactor is pyridoxal 5'-phosphate.

The catalysed reaction is L-histidinol phosphate + 2-oxoglutarate = 3-(imidazol-4-yl)-2-oxopropyl phosphate + L-glutamate. It participates in amino-acid biosynthesis; L-histidine biosynthesis; L-histidine from 5-phospho-alpha-D-ribose 1-diphosphate: step 7/9. The sequence is that of Histidinol-phosphate aminotransferase from Buchnera aphidicola subsp. Schlechtendalia chinensis.